The sequence spans 120 residues: Immunoglobulin lambda variable 2-14 (120 aa).

An N-terminal signal peptide occupies residues 1-19 (MAWALLLLTLLTQGTGSWA). Gln20 is modified (pyrrolidone carboxylic acid). A framework-1 region spans residues 20-44 (QSALTQPASVSGSPGQSITISCTGT). Residues 20–119 (QSALTQPASV…SSYTSSSTLH (100 aa)) enclose the Ig-like domain. An intrachain disulfide couples Cys41 to Cys109. Residues 45–53 (SSDVGGYNY) are complementarity-determining-1. The tract at residues 54 to 70 (VSWYQQHPGKAPKLMIY) is framework-2. The interval 71 to 73 (EVS) is complementarity-determining-2. Residues 74-109 (NRPSGVSNRFSGSKSGNTASLTISGLQAEDEADYYC) are framework-3. Positions 110-119 (SSYTSSSTLH) are complementarity-determining-3.

Immunoglobulins are composed of two identical heavy chains and two identical light chains; disulfide-linked.

The protein localises to the secreted. The protein resides in the cell membrane. In terms of biological role, v region of the variable domain of immunoglobulin light chains that participates in the antigen recognition. Immunoglobulins, also known as antibodies, are membrane-bound or secreted glycoproteins produced by B lymphocytes. In the recognition phase of humoral immunity, the membrane-bound immunoglobulins serve as receptors which, upon binding of a specific antigen, trigger the clonal expansion and differentiation of B lymphocytes into immunoglobulins-secreting plasma cells. Secreted immunoglobulins mediate the effector phase of humoral immunity, which results in the elimination of bound antigens. The antigen binding site is formed by the variable domain of one heavy chain, together with that of its associated light chain. Thus, each immunoglobulin has two antigen binding sites with remarkable affinity for a particular antigen. The variable domains are assembled by a process called V-(D)-J rearrangement and can then be subjected to somatic hypermutations which, after exposure to antigen and selection, allow affinity maturation for a particular antigen. The chain is Immunoglobulin lambda variable 2-14 from Homo sapiens (Human).